The chain runs to 157 residues: UPF0251 protein CLJ_B1488 (157 aa).

This sequence belongs to the UPF0251 family.

The sequence is that of UPF0251 protein CLJ_B1488 from Clostridium botulinum (strain 657 / Type Ba4).